Reading from the N-terminus, the 364-residue chain is tRNA 2-selenouridine synthase (364 aa).

A Rhodanese domain is found at 14–137; that stretch reads LLADTPLIDV…LRQTAIQATW (124 aa). C97 acts as the S-selanylcysteine intermediate in catalysis.

Belongs to the SelU family. In terms of assembly, monomer.

It catalyses the reaction 5-methylaminomethyl-2-thiouridine(34) in tRNA + selenophosphate + (2E)-geranyl diphosphate + H2O + H(+) = 5-methylaminomethyl-2-selenouridine(34) in tRNA + (2E)-thiogeraniol + phosphate + diphosphate. The catalysed reaction is 5-methylaminomethyl-2-thiouridine(34) in tRNA + (2E)-geranyl diphosphate = 5-methylaminomethyl-S-(2E)-geranyl-thiouridine(34) in tRNA + diphosphate. The enzyme catalyses 5-methylaminomethyl-S-(2E)-geranyl-thiouridine(34) in tRNA + selenophosphate + H(+) = 5-methylaminomethyl-2-(Se-phospho)selenouridine(34) in tRNA + (2E)-thiogeraniol. It carries out the reaction 5-methylaminomethyl-2-(Se-phospho)selenouridine(34) in tRNA + H2O = 5-methylaminomethyl-2-selenouridine(34) in tRNA + phosphate. Functionally, involved in the post-transcriptional modification of the uridine at the wobble position (U34) of tRNA(Lys), tRNA(Glu) and tRNA(Gln). Catalyzes the conversion of 2-thiouridine (S2U-RNA) to 2-selenouridine (Se2U-RNA). Acts in a two-step process involving geranylation of 2-thiouridine (S2U) to S-geranyl-2-thiouridine (geS2U) and subsequent selenation of the latter derivative to 2-selenouridine (Se2U) in the tRNA chain. This chain is tRNA 2-selenouridine synthase, found in Salmonella dublin (strain CT_02021853).